The primary structure comprises 151 residues: Ribonuclease H (151 aa).

Residues 1–141 (MKHVDIFTDG…ADELARRGME (141 aa)) form the RNase H type-1 domain. Asp9, Glu47, Asp69, and Asp133 together coordinate Mg(2+).

This sequence belongs to the RNase H family. Monomer. Requires Mg(2+) as cofactor.

The protein resides in the cytoplasm. It carries out the reaction Endonucleolytic cleavage to 5'-phosphomonoester.. Endonuclease that specifically degrades the RNA of RNA-DNA hybrids. This chain is Ribonuclease H, found in Rhizobium etli (strain ATCC 51251 / DSM 11541 / JCM 21823 / NBRC 15573 / CFN 42).